Here is a 179-residue protein sequence, read N- to C-terminus: Ribosome maturation factor RimM (179 aa).

A PRC barrel domain is found at 103-176 (EPDTYYDHQL…IVEIDPPKGL (74 aa)).

Belongs to the RimM family. As to quaternary structure, binds ribosomal protein uS19.

It localises to the cytoplasm. Functionally, an accessory protein needed during the final step in the assembly of 30S ribosomal subunit, possibly for assembly of the head region. Essential for efficient processing of 16S rRNA. May be needed both before and after RbfA during the maturation of 16S rRNA. It has affinity for free ribosomal 30S subunits but not for 70S ribosomes. The chain is Ribosome maturation factor RimM from Mycobacterium leprae (strain Br4923).